The chain runs to 341 residues: N-acetyl-gamma-glutamyl-phosphate reductase (341 aa).

Residue C149 is part of the active site.

The protein belongs to the NAGSA dehydrogenase family. Type 1 subfamily.

The protein localises to the cytoplasm. It carries out the reaction N-acetyl-L-glutamate 5-semialdehyde + phosphate + NADP(+) = N-acetyl-L-glutamyl 5-phosphate + NADPH + H(+). It functions in the pathway amino-acid biosynthesis; L-arginine biosynthesis; N(2)-acetyl-L-ornithine from L-glutamate: step 3/4. Its function is as follows. Catalyzes the NADPH-dependent reduction of N-acetyl-5-glutamyl phosphate to yield N-acetyl-L-glutamate 5-semialdehyde. In Methanocaldococcus jannaschii (strain ATCC 43067 / DSM 2661 / JAL-1 / JCM 10045 / NBRC 100440) (Methanococcus jannaschii), this protein is N-acetyl-gamma-glutamyl-phosphate reductase.